The chain runs to 222 residues: Putative hemin import ATP-binding protein HrtA (222 aa).

The region spanning 3-222 (LVVKDISKTF…QLYDGKIKNS (220 aa)) is the ABC transporter domain. Position 39 to 46 (39 to 46 (GASGSGKT)) interacts with ATP.

The protein belongs to the ABC transporter superfamily. HrtA family. The complex is composed of two ATP-binding proteins (HrtA), two transmembrane proteins (HrtB) and a solute-binding protein.

Its subcellular location is the cell membrane. Functionally, part of the ABC transporter complex hrt involved in hemin import. Responsible for energy coupling to the transport system. The polypeptide is Putative hemin import ATP-binding protein HrtA (hrtA) (Staphylococcus epidermidis (strain ATCC 12228 / FDA PCI 1200)).